Here is a 98-residue protein sequence, read N- to C-terminus: NADH-quinone oxidoreductase subunit K (98 aa).

The next 3 membrane-spanning stretches (helical) occupy residues 1-21 (MGHL…GIFL), 27-47 (IVLL…FIAF), and 59-79 (FVFF…AILV).

The protein belongs to the complex I subunit 4L family. NDH-1 is composed of 14 different subunits. Subunits NuoA, H, J, K, L, M, N constitute the membrane sector of the complex.

It is found in the cell inner membrane. It catalyses the reaction a quinone + NADH + 5 H(+)(in) = a quinol + NAD(+) + 4 H(+)(out). Its function is as follows. NDH-1 shuttles electrons from NADH, via FMN and iron-sulfur (Fe-S) centers, to quinones in the respiratory chain. The immediate electron acceptor for the enzyme in this species is believed to be ubiquinone. Couples the redox reaction to proton translocation (for every two electrons transferred, four hydrogen ions are translocated across the cytoplasmic membrane), and thus conserves the redox energy in a proton gradient. This chain is NADH-quinone oxidoreductase subunit K, found in Xanthomonas oryzae pv. oryzae (strain PXO99A).